We begin with the raw amino-acid sequence, 170 residues long: ATP synthase subunit b (170 aa).

The chain crosses the membrane as a helical span at residues 30–50 (FFFVLAIFLVVLAVIGTFVVP).

Belongs to the ATPase B chain family. As to quaternary structure, F-type ATPases have 2 components, F(1) - the catalytic core - and F(0) - the membrane proton channel. F(1) has five subunits: alpha(3), beta(3), gamma(1), delta(1), epsilon(1). F(0) has three main subunits: a(1), b(2) and c(10-14). The alpha and beta chains form an alternating ring which encloses part of the gamma chain. F(1) is attached to F(0) by a central stalk formed by the gamma and epsilon chains, while a peripheral stalk is formed by the delta and b chains.

The protein localises to the cell membrane. In terms of biological role, f(1)F(0) ATP synthase produces ATP from ADP in the presence of a proton or sodium gradient. F-type ATPases consist of two structural domains, F(1) containing the extramembraneous catalytic core and F(0) containing the membrane proton channel, linked together by a central stalk and a peripheral stalk. During catalysis, ATP synthesis in the catalytic domain of F(1) is coupled via a rotary mechanism of the central stalk subunits to proton translocation. Its function is as follows. Component of the F(0) channel, it forms part of the peripheral stalk, linking F(1) to F(0). This is ATP synthase subunit b from Mycobacterium ulcerans (strain Agy99).